The primary structure comprises 968 residues: RNA polymerase-associated protein RapA (968 aa).

Residues 163-332 (EVGRRYAPRV…FARLRLLDPD (170 aa)) enclose the Helicase ATP-binding domain. Residue 176-183 (DEVGLGKT) coordinates ATP. A DEAH box motif is present at residues 278 to 281 (DEAH). Positions 491-655 (RVDWLIEFLK…EFAEDLLNVL (165 aa)) constitute a Helicase C-terminal domain.

This sequence belongs to the SNF2/RAD54 helicase family. RapA subfamily. As to quaternary structure, interacts with the RNAP. Has a higher affinity for the core RNAP than for the holoenzyme. Its ATPase activity is stimulated by binding to RNAP.

In terms of biological role, transcription regulator that activates transcription by stimulating RNA polymerase (RNAP) recycling in case of stress conditions such as supercoiled DNA or high salt concentrations. Probably acts by releasing the RNAP, when it is trapped or immobilized on tightly supercoiled DNA. Does not activate transcription on linear DNA. Probably not involved in DNA repair. This is RNA polymerase-associated protein RapA from Shewanella baltica (strain OS155 / ATCC BAA-1091).